A 165-amino-acid polypeptide reads, in one-letter code: Large ribosomal subunit protein uL10 (165 aa).

Belongs to the universal ribosomal protein uL10 family. Part of the ribosomal stalk of the 50S ribosomal subunit. The N-terminus interacts with L11 and the large rRNA to form the base of the stalk. The C-terminus forms an elongated spine to which L12 dimers bind in a sequential fashion forming a multimeric L10(L12)X complex.

In terms of biological role, forms part of the ribosomal stalk, playing a central role in the interaction of the ribosome with GTP-bound translation factors. This chain is Large ribosomal subunit protein uL10, found in Sodalis glossinidius (strain morsitans).